The sequence spans 398 residues: MAGSKWETEETNQFAIENQKLEEEWRKKRRLEKKRKRKILEEEEKAEERNIDACRLYLMGNTPELKSCNSIDDYEILEKIEEGSYGIVYRGLDKSTNTLVALKKIKFDPNGIGFPITSLREIESLSSIRHDNIVELEKVVVGKDLKDVYLVMEFMEHDLKTLLDNMPEDFLQSEVKTLMLQLLAATAFMHHHWYLHRDLKPSNLLMNNTGEIKLADFGLARPVSEPKSSLTRLVVTLWYRAPELLLGAPSYGKEIDMWSIGCIFAEMITRTPLFSGKSELDQLYKIFNLLGYPTREEWPQYFLLPYANKIKHPTVPTHSKIRTSIPNLTGNAYDLLNRLLSLNPAKRISAKEALEHPYFYESPRPKDPKFFPTFPSKAKGESKEKNVFQSFRSASPKK.

Positions 74–359 (YEILEKIEEG…AKEALEHPYF (286 aa)) constitute a Protein kinase domain. ATP is bound by residues 80 to 88 (IEEGSYGIV) and K103. D198 (proton acceptor) is an active-site residue. The disordered stretch occupies residues 359 to 398 (FYESPRPKDPKFFPTFPSKAKGESKEKNVFQSFRSASPKK). Polar residues predominate over residues 387-398 (VFQSFRSASPKK).

The protein belongs to the protein kinase superfamily. Ser/Thr protein kinase family.

Its subcellular location is the nucleus. The catalysed reaction is L-seryl-[protein] + ATP = O-phospho-L-seryl-[protein] + ADP + H(+). The enzyme catalyses L-threonyl-[protein] + ATP = O-phospho-L-threonyl-[protein] + ADP + H(+). The polypeptide is Serine/threonine-protein kinase ppk23 (ppk23) (Schizosaccharomyces pombe (strain 972 / ATCC 24843) (Fission yeast)).